The following is a 562-amino-acid chain: Tubby-related protein 2 (562 aa).

The tract at residues 1-81 (MDREGPRGPR…RRGEERFQSD (81 aa)) is disordered. Residues 35 to 46 (QKLEQQRQLFEK) show a composition bias toward basic and acidic residues. Phosphoserine occurs at positions 152, 153, and 155. The disordered stretch occupies residues 179 to 294 (LRRGWLASPG…SNHNAWNMTC (116 aa)). Thr211 is subject to Phosphothreonine. Ser213 carries the phosphoserine modification. Over residues 225–240 (DGDHGDLAPCKVEENT) the composition is skewed to basic and acidic residues. The span at 285 to 294 (SNHNAWNMTC) shows a compositional bias: polar residues.

Belongs to the TUB family. As to expression, expressed in retina and testis.

It is found in the cytoplasm. Its subcellular location is the secreted. The sequence is that of Tubby-related protein 2 (Tulp2) from Mus musculus (Mouse).